The following is a 961-amino-acid chain: Probable exosome complex exonuclease RRP44 (961 aa).

The PINc domain occupies 73 to 188; it reads HALIVDSTSL…LVFDEDSKKR (116 aa). Positions 232-338 constitute a CSD1 domain; that stretch reads IFDEYLSHDR…DEENDDENDE (107 aa). The interval 322 to 346 is disordered; sequence ADDMGNEDEENDDENDEPKAKKSKK. The span at 325-337 shows a compositional bias: acidic residues; the sequence is MGNEDEENDDEND. A CSD2 domain is found at 381–447; it reads LFCPAERLIP…ENEVLLLEHD (67 aa). Positions 479–809 constitute an RNB domain; the sequence is RVDLRDLTIC…IVHRLLAAAI (331 aa).

It belongs to the RNR ribonuclease family. As to quaternary structure, component of the RNA exosome complex. Ubiquitously expressed.

The protein resides in the nucleus. Its subcellular location is the nucleoplasm. Functionally, putative catalytic component of the RNA exosome complex which has 3'-&gt;5' exoribonuclease activity and participates in a multitude of cellular RNA processing and degradation events. Has both 3'-5' exonuclease and endonuclease activities. Involved in regulation of antisense ribosomal siRNA production. The polypeptide is Probable exosome complex exonuclease RRP44 (dis-3) (Caenorhabditis elegans).